Consider the following 274-residue polypeptide: Histone H1.1 (274 aa).

Disordered stretches follow at residues Met1–Pro63 and Pro129–Val155. N-acetylserine is present on Ser2. Residues Thr16–Ala25 show a composition bias toward low complexity. Residues Asn40–Thr49 show a composition bias toward basic and acidic residues. Residues Ser61–Ser130 enclose the H15 domain. Residues Pro129–Ser145 are compositionally biased toward low complexity. Lys161 participates in a covalent cross-link: Glycyl lysine isopeptide (Lys-Gly) (interchain with G-Cter in ubiquitin). 2 disordered regions span residues Ala167–Lys233 and Lys249–Lys274. 2 stretches are compositionally biased toward low complexity: residues Ala175–Lys185 and Ala221–Lys233.

It belongs to the histone H1/H5 family.

It localises to the nucleus. The protein localises to the chromosome. In terms of biological role, histones H1 are necessary for the condensation of nucleosome chains into higher-order structures. In Arabidopsis thaliana (Mouse-ear cress), this protein is Histone H1.1.